A 411-amino-acid polypeptide reads, in one-letter code: Serine hydroxymethyltransferase (411 aa).

Residues Leu-119 and 123–125 (GHL) contribute to the (6S)-5,6,7,8-tetrahydrofolate site. Lys-228 is subject to N6-(pyridoxal phosphate)lysine. 351–353 (SPF) is a binding site for (6S)-5,6,7,8-tetrahydrofolate.

It belongs to the SHMT family. As to quaternary structure, homodimer. The cofactor is pyridoxal 5'-phosphate.

Its subcellular location is the cytoplasm. The catalysed reaction is (6R)-5,10-methylene-5,6,7,8-tetrahydrofolate + glycine + H2O = (6S)-5,6,7,8-tetrahydrofolate + L-serine. It participates in one-carbon metabolism; tetrahydrofolate interconversion. It functions in the pathway amino-acid biosynthesis; glycine biosynthesis; glycine from L-serine: step 1/1. In terms of biological role, catalyzes the reversible interconversion of serine and glycine with tetrahydrofolate (THF) serving as the one-carbon carrier. This reaction serves as the major source of one-carbon groups required for the biosynthesis of purines, thymidylate, methionine, and other important biomolecules. Also exhibits THF-independent aldolase activity toward beta-hydroxyamino acids, producing glycine and aldehydes, via a retro-aldol mechanism. This Clostridium botulinum (strain Eklund 17B / Type B) protein is Serine hydroxymethyltransferase.